The sequence spans 1024 residues: Protein translocase subunit SecA (1024 aa).

ATP contacts are provided by residues glutamine 143, 161 to 165, and aspartate 661; that span reads GEGKT. A disordered region spans residues 970 to 1024; sequence HEEAGSVYNAQPDGEPESQASKQQPVVADHSKPGRNDLCPCGSGKKYKNCHGREA. 4 residues coordinate Zn(2+): cysteine 1008, cysteine 1010, cysteine 1019, and histidine 1020. The span at 1014–1024 shows a compositional bias: basic residues; the sequence is KKYKNCHGREA.

Belongs to the SecA family. As to quaternary structure, monomer and homodimer. Part of the essential Sec protein translocation apparatus which comprises SecA, SecYEG and auxiliary proteins SecDF. Other proteins may also be involved. Zn(2+) is required as a cofactor.

The protein resides in the cell inner membrane. It is found in the cytoplasm. It catalyses the reaction ATP + H2O + cellular proteinSide 1 = ADP + phosphate + cellular proteinSide 2.. Functionally, part of the Sec protein translocase complex. Interacts with the SecYEG preprotein conducting channel. Has a central role in coupling the hydrolysis of ATP to the transfer of proteins into and across the cell membrane, serving as an ATP-driven molecular motor driving the stepwise translocation of polypeptide chains across the membrane. In Chlorobium luteolum (strain DSM 273 / BCRC 81028 / 2530) (Pelodictyon luteolum), this protein is Protein translocase subunit SecA.